The sequence spans 741 residues: Ethylene receptor (741 aa).

Transmembrane regions (helical) follow at residues 23–43 (ISDFFIALAYFSIPLELIYFV), 53–73 (WVLVQFGAFIVLCGATHLINL), and 92–112 (VLTAVVSCATALMLVHIIPDL). The Cu cation site is built by Cys65 and His69. In terms of domain architecture, GAF spans 158–307 (DRHTILKTTL…VVADQVAVAL (150 aa)). The 240-residue stretch at 350 to 589 (VMNHEMRTPM…TFIVKLGFPE (240 aa)) folds into the Histidine kinase domain. At His353 the chain carries Phosphohistidine; by autocatalysis. Residues 615 to 732 (KVLVMDDNGV…KMRSVLSELL (118 aa)) enclose the Response regulatory domain. Asp663 carries the 4-aspartylphosphate modification.

It belongs to the ethylene receptor family. Homodimer; disulfide-linked. Cu cation serves as cofactor. Activation probably requires a transfer of a phosphate group between a His in the transmitter domain and an Asp of the receiver domain.

Its subcellular location is the endoplasmic reticulum membrane. The catalysed reaction is ATP + protein L-histidine = ADP + protein N-phospho-L-histidine.. May act early in the ethylene signal transduction pathway, possibly as an ethylene receptor, or as a regulator of the pathway. The protein is Ethylene receptor (ETR1) of Malus domestica (Apple).